We begin with the raw amino-acid sequence, 209 residues long: Orotate phosphoribosyltransferase (209 aa).

Residues Arg96, Lys100, His102, and 122-130 (EDLISTGGS) each bind 5-phospho-alpha-D-ribose 1-diphosphate. Ser126 lines the orotate pocket.

The protein belongs to the purine/pyrimidine phosphoribosyltransferase family. PyrE subfamily. Homodimer. It depends on Mg(2+) as a cofactor.

It catalyses the reaction orotidine 5'-phosphate + diphosphate = orotate + 5-phospho-alpha-D-ribose 1-diphosphate. The protein operates within pyrimidine metabolism; UMP biosynthesis via de novo pathway; UMP from orotate: step 1/2. Its function is as follows. Catalyzes the transfer of a ribosyl phosphate group from 5-phosphoribose 1-diphosphate to orotate, leading to the formation of orotidine monophosphate (OMP). The protein is Orotate phosphoribosyltransferase of Streptococcus thermophilus (strain ATCC BAA-491 / LMD-9).